We begin with the raw amino-acid sequence, 236 residues long: Protein EVI2A (236 aa).

Positions 1-30 (MPTDMEHTGHYLHLAFLMTTVFSLSPGTKA) are cleaved as a signal peptide. 5 N-linked (GlcNAc...) asparagine glycosylation sites follow: Asn-31, Asn-38, Asn-49, Asn-73, and Asn-112. Residues 31 to 133 (NYTRLWANST…DVCAENNNNM (103 aa)) lie on the Extracellular side of the membrane. The chain crosses the membrane as a helical span at residues 134 to 154 (AMLICLIIIAVLFLICTFLFL). Residues 155-236 (STVVLANKVS…TEKLTNKQIG (82 aa)) lie on the Cytoplasmic side of the membrane. Ser-211 carries the post-translational modification Phosphoserine. The tract at residues 217–236 (ATRERKDEEGTEKLTNKQIG) is disordered. A compositionally biased stretch (basic and acidic residues) spans 218–236 (TRERKDEEGTEKLTNKQIG).

It belongs to the EVI2A family.

The protein resides in the membrane. Functionally, may complex with itself or/and other proteins within the membrane, to function as part of a cell-surface receptor. The chain is Protein EVI2A (EVI2A) from Homo sapiens (Human).